The sequence spans 398 residues: Serine/threonine-protein phosphatase 4 regulatory subunit 2-B (398 aa).

Residues 138–398 form a disordered region; sequence SSEKNTSPSL…NAPEEPMEQD (261 aa). Composition is skewed to polar residues over residues 139–149, 156–170, and 183–193; these read SEKNTSPSLNR, PSNS…NVNG, and TLSSPMNTNGL. Positions 197 to 211 are enriched in basic and acidic residues; the sequence is MENKESDLQQKEKSL. Positions 278 to 294 are enriched in polar residues; that stretch reads ASTSADKGKESCQTAQT. Residues 338-366 are compositionally biased toward low complexity; sequence SESACSLNSEEPNSAAAAASTAGTDSSEG.

Belongs to the PPP4R2 family. Serine/threonine-protein phosphatase 4 (PP4) occurs in different assemblies of the catalytic and one or more regulatory subunits.

Functionally, regulatory subunit of serine/threonine-protein phosphatase 4 (PP4). This chain is Serine/threonine-protein phosphatase 4 regulatory subunit 2-B (ppp4r2-b), found in Xenopus laevis (African clawed frog).